The following is a 627-amino-acid chain: Pescadillo homolog (627 aa).

A BRCT domain is found at 321-414 (RLRTLFKGLK…QLLPTNKYFI (94 aa)). 3 disordered regions span residues 436-471 (PEEKALHDPSLIETHEQSDDDSDEEAAQEEEEAVDQ), 489-562 (YKKY…LQAR), and 596-627 (FEAGEKEARKTAKRAARKEAAAAAAKASKLGK). Phosphoserine is present on residues S453 and S457. Composition is skewed to acidic residues over residues 453-471 (SDDDSDEEAAQEEEEAVDQ) and 498-521 (VNEDEEDPEEDEEDEDEEEEEELD). Over residues 522 to 533 (EQAKRLKEEKQK) the composition is skewed to basic and acidic residues. The span at 540-549 (KVHKVNKRQL) shows a compositional bias: basic residues. Basic and acidic residues-rich tracts occupy residues 550 to 559 (HKAEVDEHRL) and 596 to 605 (FEAGEKEARK). A compositionally biased stretch (low complexity) spans 616 to 627 (AAAAAKASKLGK).

It belongs to the pescadillo family.

It is found in the nucleus. It localises to the nucleolus. The protein localises to the nucleoplasm. Its function is as follows. Required for maturation of ribosomal RNAs and formation of the large ribosomal subunit. This Drosophila ananassae (Fruit fly) protein is Pescadillo homolog.